We begin with the raw amino-acid sequence, 173 residues long: ATP synthase subunit beta, mitochondrial (173 aa).

Belongs to the ATPase alpha/beta chains family. In terms of assembly, F-type ATPases have 2 components, CF(1) - the catalytic core - and CF(0) - the membrane proton channel. CF(1) has five subunits: alpha(3), beta(3), gamma(1), delta(1), epsilon(1). CF(0) has three main subunits: a, b and c.

It localises to the mitochondrion. Its subcellular location is the mitochondrion inner membrane. It catalyses the reaction ATP + H2O + 4 H(+)(in) = ADP + phosphate + 5 H(+)(out). Mitochondrial membrane ATP synthase (F(1)F(0) ATP synthase or Complex V) produces ATP from ADP in the presence of a proton gradient across the membrane which is generated by electron transport complexes of the respiratory chain. F-type ATPases consist of two structural domains, F(1) - containing the extramembraneous catalytic core and F(0) - containing the membrane proton channel, linked together by a central stalk and a peripheral stalk. During catalysis, ATP synthesis in the catalytic domain of F(1) is coupled via a rotary mechanism of the central stalk subunits to proton translocation. Subunits alpha and beta form the catalytic core in F(1). Rotation of the central stalk against the surrounding alpha(3)beta(3) subunits leads to hydrolysis of ATP in three separate catalytic sites on the beta subunits. The protein is ATP synthase subunit beta, mitochondrial (ATPB) of Actinidia deliciosa (Kiwi).